A 315-amino-acid polypeptide reads, in one-letter code: Carbamate kinase (315 aa).

It belongs to the carbamate kinase family. As to quaternary structure, homodimer.

Its subcellular location is the cytoplasm. The catalysed reaction is hydrogencarbonate + NH4(+) + ATP = carbamoyl phosphate + ADP + H2O + H(+). In Thermococcus kodakarensis (strain ATCC BAA-918 / JCM 12380 / KOD1) (Pyrococcus kodakaraensis (strain KOD1)), this protein is Carbamate kinase (cpkA).